A 233-amino-acid chain; its full sequence is Pyridoxal 5'-phosphate synthase subunit PdxT (233 aa).

61 to 63 (GES) lines the L-glutamine pocket. C93 serves as the catalytic Nucleophile. L-glutamine-binding positions include R127 and 163-164 (IR). Active-site charge relay system residues include H212 and E214.

Belongs to the glutaminase PdxT/SNO family. In the presence of PdxS, forms a dodecamer of heterodimers. Only shows activity in the heterodimer.

It catalyses the reaction aldehydo-D-ribose 5-phosphate + D-glyceraldehyde 3-phosphate + L-glutamine = pyridoxal 5'-phosphate + L-glutamate + phosphate + 3 H2O + H(+). It carries out the reaction L-glutamine + H2O = L-glutamate + NH4(+). It functions in the pathway cofactor biosynthesis; pyridoxal 5'-phosphate biosynthesis. In terms of biological role, catalyzes the hydrolysis of glutamine to glutamate and ammonia as part of the biosynthesis of pyridoxal 5'-phosphate. The resulting ammonia molecule is channeled to the active site of PdxS. In Paenarthrobacter aurescens (strain TC1), this protein is Pyridoxal 5'-phosphate synthase subunit PdxT.